We begin with the raw amino-acid sequence, 687 residues long: Glycine--tRNA ligase beta subunit (687 aa).

It belongs to the class-II aminoacyl-tRNA synthetase family. In terms of assembly, tetramer of two alpha and two beta subunits.

The protein resides in the cytoplasm. It carries out the reaction tRNA(Gly) + glycine + ATP = glycyl-tRNA(Gly) + AMP + diphosphate. This chain is Glycine--tRNA ligase beta subunit, found in Neisseria meningitidis serogroup B (strain ATCC BAA-335 / MC58).